The sequence spans 249 residues: NH(3)-dependent NAD(+) synthetase (249 aa).

29–36 (GVSGGVDS) is an ATP binding site. Asp-35 provides a ligand contact to Mg(2+). Arg-116 lines the deamido-NAD(+) pocket. Residue Thr-136 participates in ATP binding. Glu-141 contributes to the Mg(2+) binding site. Positions 149 and 156 each coordinate deamido-NAD(+). Lys-165 and Ser-187 together coordinate ATP. A deamido-NAD(+)-binding site is contributed by 233–234 (HK).

The protein belongs to the NAD synthetase family. In terms of assembly, homodimer.

The enzyme catalyses deamido-NAD(+) + NH4(+) + ATP = AMP + diphosphate + NAD(+) + H(+). It functions in the pathway cofactor biosynthesis; NAD(+) biosynthesis; NAD(+) from deamido-NAD(+) (ammonia route): step 1/1. Catalyzes the ATP-dependent amidation of deamido-NAD to form NAD. Uses ammonia as a nitrogen source. In Syntrophomonas wolfei subsp. wolfei (strain DSM 2245B / Goettingen), this protein is NH(3)-dependent NAD(+) synthetase.